A 230-amino-acid chain; its full sequence is Phosphatidylserine decarboxylase proenzyme (230 aa).

S186 (schiff-base intermediate with substrate; via pyruvic acid) is an active-site residue. S186 bears the Pyruvic acid (Ser); by autocatalysis mark.

It belongs to the phosphatidylserine decarboxylase family. PSD-A subfamily. In terms of assembly, heterodimer of a large membrane-associated beta subunit and a small pyruvoyl-containing alpha subunit. Pyruvate is required as a cofactor. In terms of processing, is synthesized initially as an inactive proenzyme. Formation of the active enzyme involves a self-maturation process in which the active site pyruvoyl group is generated from an internal serine residue via an autocatalytic post-translational modification. Two non-identical subunits are generated from the proenzyme in this reaction, and the pyruvate is formed at the N-terminus of the alpha chain, which is derived from the carboxyl end of the proenzyme. The post-translation cleavage follows an unusual pathway, termed non-hydrolytic serinolysis, in which the side chain hydroxyl group of the serine supplies its oxygen atom to form the C-terminus of the beta chain, while the remainder of the serine residue undergoes an oxidative deamination to produce ammonia and the pyruvoyl prosthetic group on the alpha chain.

The protein resides in the cell membrane. It carries out the reaction a 1,2-diacyl-sn-glycero-3-phospho-L-serine + H(+) = a 1,2-diacyl-sn-glycero-3-phosphoethanolamine + CO2. It functions in the pathway phospholipid metabolism; phosphatidylethanolamine biosynthesis; phosphatidylethanolamine from CDP-diacylglycerol: step 2/2. Functionally, catalyzes the formation of phosphatidylethanolamine (PtdEtn) from phosphatidylserine (PtdSer). The polypeptide is Phosphatidylserine decarboxylase proenzyme (Wolbachia sp. subsp. Brugia malayi (strain TRS)).